The primary structure comprises 270 residues: Transcription factor PU.1 (270 aa).

Residues 123–164 (SLSPAQPSSDEEEGERQSPPLEVSDGEADGLEPGPGLLPGET) form a disordered region. Residues Ser-140 and Ser-146 each carry the phosphoserine modification. Over residues 153-164 (LEPGPGLLPGET) the composition is skewed to low complexity. Residues 170–253 (IRLYQFLLDL…VKKKLTYQFS (84 aa)) constitute a DNA-binding region (ETS). Positions 217, 230, 233, and 243 each coordinate DNA.

It belongs to the ETS family. As to quaternary structure, binds DNA as a monomer. Can form homomers. Directly interacts with CEBPD/NF-IL6-beta; this interaction does not affect DNA-binding properties of each partner. Interacts with NONO/p54(nrb). Interacts with RUNX1/AML1. Interacts with GFI1; the interaction represses SPI1 transcriptional activity, hence blocks SPI1-induced macrophage differentiation of myeloid progenitor cells. Interacts with CEBPE. Interacts with IRF4/Pip and IRF8. Interacts with JUN. Interacts with RB1. Interacts with TBP. In terms of tissue distribution, in the bone marrow, concentrated in hematopoietic stem cell, lymphoid progenitor, myeloid lineage (granulocyte macrophage progenitors, classical dendritic cells, monocytes) and B-cell clusters. Among B-cells, predominantly expressed in pre-B1 cells. Expressed in germinal center B-cells.

The protein resides in the nucleus. With respect to regulation, transcriptional activity at macrophage-specific genes is inhibited by interaction with GFI1, which results in the inhibition of SPI1-induced macrophage differentiation of myeloid progenitor cells, but not that of the granulocyte lineage. Pioneer transcription factor, which controls hematopoietic cell fate by decompacting stem cell heterochromatin and allowing other transcription factors to enter otherwise inaccessible genomic sites. Once in open chromatin, can directly control gene expression by binding genetic regulatory elements and can also more broadly influence transcription by recruiting transcription factors, such as interferon regulatory factors (IRFs), to otherwise inaccessible genomic regions. Transcriptionally activates genes important for myeloid and lymphoid lineages, such as CSF1R. Transcriptional activation from certain promoters, possibly containing low affinity binding sites, is achieved cooperatively with other transcription factors. FCER1A transactivation is achieved in cooperation with GATA1. May be particularly important for the pro- to pre-B cell transition. Binds (via the ETS domain) onto the purine-rich DNA core sequence 5'-GAGGAA-3', also known as the PU-box. In vitro can bind RNA and interfere with pre-mRNA splicing. This chain is Transcription factor PU.1 (SPI1), found in Homo sapiens (Human).